We begin with the raw amino-acid sequence, 112 residues long: MPPKNCTHLGGCDSDCLTRSEIQALFREAINTLKHTMNTENVCAHMLDIVSFERIKEYIRANLGHFTVITDKCSKRKVCLHHKRIARLLGIKKIYHQEYKRVVSKVYKKQTW.

The interval 42-61 is dimer 1 domain; that stretch reads VCAHMLDIVSFERIKEYIRA. The interval 72 to 101 is dimer 2 domain; the sequence is KCSKRKVCLHHKRIARLLGIKKIYHQEYKR.

It belongs to the baculoviridae LEF-11 family. Homooligomer.

The protein localises to the host nucleus. Functionally, plays an essential role in viral genome replication. Involved also in late/very late gene activation. In Autographa californica nuclear polyhedrosis virus (AcMNPV), this protein is Late expression factor 11 (LEF-11).